We begin with the raw amino-acid sequence, 169 residues long: N-alpha-acetyltransferase 50 (169 aa).

Residues 5 to 154 form the N-acetyltransferase domain; sequence IELGDVTPHN…DAHVLQKNLK (150 aa). Residue Tyr30 coordinates substrate. Tyr72 is an active-site residue. Substrate is bound at residue Met74. 76 to 89 is a binding site for acetyl-CoA; the sequence is LGCLAPYRRLGIGT. 78–89 is a binding site for CoA; that stretch reads CLAPYRRLGIGT. His111 is an active-site residue. 116 to 125 serves as a coordination point for CoA; that stretch reads NESAIDFYRK. The substrate stretch occupies residues 137 to 140; the sequence is YYKR.

It belongs to the acetyltransferase family. GNAT subfamily.

Its subcellular location is the cytoplasm. The protein localises to the nucleus. The catalysed reaction is N-terminal L-methionyl-L-alanyl-[protein] + acetyl-CoA = N-terminal N(alpha)-acetyl-L-methionyl-L-alanyl-[protein] + CoA + H(+). It carries out the reaction N-terminal L-methionyl-L-seryl-[protein] + acetyl-CoA = N-terminal N(alpha)-acetyl-L-methionyl-L-seryl-[protein] + CoA + H(+). The enzyme catalyses N-terminal L-methionyl-L-valyl-[protein] + acetyl-CoA = N-terminal N(alpha)-acetyl-L-methionyl-L-valyl-[protein] + CoA + H(+). It catalyses the reaction N-terminal L-methionyl-L-threonyl-[protein] + acetyl-CoA = N-terminal N(alpha)-acetyl-L-methionyl-L-threonyl-[protein] + CoA + H(+). The catalysed reaction is N-terminal L-methionyl-L-lysyl-[protein] + acetyl-CoA = N-terminal N(alpha)-acetyl-L-methionyl-L-lysyl-[protein] + CoA + H(+). It carries out the reaction N-terminal L-methionyl-L-leucyl-[protein] + acetyl-CoA = N-terminal N(alpha)-acetyl-L-methionyl-L-leucyl-[protein] + CoA + H(+). The enzyme catalyses N-terminal L-methionyl-L-phenylalanyl-[protein] + acetyl-CoA = N-terminal N(alpha)-acetyl-L-methionyl-L-phenylalanyl-[protein] + CoA + H(+). It catalyses the reaction N-terminal L-methionyl-L-tyrosyl-[protein] + acetyl-CoA = N-terminal N(alpha)-acetyl-L-methionyl-L-tyrosyl-[protein] + CoA + H(+). In terms of biological role, N-alpha-acetyltransferase that acetylates the N-terminus of proteins that retain their initiating methionine. Has a broad substrate specificity: able to acetylate the initiator methionine of most peptides, except for those with a proline in second position. Also displays N-epsilon-acetyltransferase activity by mediating acetylation of the side chain of specific lysines on proteins. The relevance of N-epsilon-acetyltransferase activity is however unclear. Required for sister chromatid cohesion during mitosis by promoting binding of CDCA5/sororin to cohesin. The protein is N-alpha-acetyltransferase 50 (naa50) of Xenopus tropicalis (Western clawed frog).